The chain runs to 432 residues: Adenylosuccinate synthetase (432 aa).

Residues 11–17 (GDEGKGK) and 39–41 (GHT) contribute to the GTP site. Asp-12 serves as the catalytic Proton acceptor. The Mg(2+) site is built by Asp-12 and Gly-39. IMP is bound by residues 12–15 (DEGK), 37–40 (NAGH), Thr-134, Arg-148, Asn-230, Thr-245, and Arg-309. His-40 acts as the Proton donor in catalysis. 305–311 (VTTGRKR) lines the substrate pocket. GTP is bound by residues Arg-311, 337 to 339 (KLD), and 419 to 421 (GTG).

Belongs to the adenylosuccinate synthetase family. Homodimer. Requires Mg(2+) as cofactor.

It is found in the cytoplasm. It catalyses the reaction IMP + L-aspartate + GTP = N(6)-(1,2-dicarboxyethyl)-AMP + GDP + phosphate + 2 H(+). It functions in the pathway purine metabolism; AMP biosynthesis via de novo pathway; AMP from IMP: step 1/2. Functionally, plays an important role in the de novo pathway and in the salvage pathway of purine nucleotide biosynthesis. Catalyzes the first committed step in the biosynthesis of AMP from IMP. In Candida glabrata (strain ATCC 2001 / BCRC 20586 / JCM 3761 / NBRC 0622 / NRRL Y-65 / CBS 138) (Yeast), this protein is Adenylosuccinate synthetase.